The primary structure comprises 675 residues: Methionine--tRNA ligase (675 aa).

The short motif at 15–25 (PYANGSIHLGH) is the 'HIGH' region element. Zn(2+)-binding residues include Cys-146, Cys-149, Cys-159, and Cys-162. Positions 332 to 336 (KMSKS) match the 'KMSKS' region motif. Lys-335 lines the ATP pocket. Residues 573-675 (DFAKVDMRIA…SGAQPGMQVK (103 aa)) form the tRNA-binding domain.

The protein belongs to the class-I aminoacyl-tRNA synthetase family. MetG type 1 subfamily. As to quaternary structure, homodimer. Zn(2+) serves as cofactor.

Its subcellular location is the cytoplasm. It carries out the reaction tRNA(Met) + L-methionine + ATP = L-methionyl-tRNA(Met) + AMP + diphosphate. Is required not only for elongation of protein synthesis but also for the initiation of all mRNA translation through initiator tRNA(fMet) aminoacylation. This chain is Methionine--tRNA ligase, found in Yersinia pseudotuberculosis serotype IB (strain PB1/+).